We begin with the raw amino-acid sequence, 427 residues long: Ribosomal protein uS12 methylthiotransferase RimO (427 aa).

The MTTase N-terminal domain maps to methionine 1 to isoleucine 116. Cysteine 10, cysteine 46, cysteine 79, cysteine 145, cysteine 149, and cysteine 152 together coordinate [4Fe-4S] cluster. One can recognise a Radical SAM core domain in the interval valine 131–glutamate 360. Positions glutamate 363 to glutamate 426 constitute a TRAM domain.

This sequence belongs to the methylthiotransferase family. RimO subfamily. Requires [4Fe-4S] cluster as cofactor.

It localises to the cytoplasm. The enzyme catalyses L-aspartate(89)-[ribosomal protein uS12]-hydrogen + (sulfur carrier)-SH + AH2 + 2 S-adenosyl-L-methionine = 3-methylsulfanyl-L-aspartate(89)-[ribosomal protein uS12]-hydrogen + (sulfur carrier)-H + 5'-deoxyadenosine + L-methionine + A + S-adenosyl-L-homocysteine + 2 H(+). Functionally, catalyzes the methylthiolation of an aspartic acid residue of ribosomal protein uS12. This is Ribosomal protein uS12 methylthiotransferase RimO from Thermosipho africanus (strain TCF52B).